Consider the following 309-residue polypeptide: Tagatose-6-phosphate kinase (309 aa).

It belongs to the carbohydrate kinase PfkB family. LacC subfamily.

It carries out the reaction D-tagatofuranose 6-phosphate + ATP = D-tagatofuranose 1,6-bisphosphate + ADP + H(+). It participates in carbohydrate metabolism; D-tagatose 6-phosphate degradation; D-glyceraldehyde 3-phosphate and glycerone phosphate from D-tagatose 6-phosphate: step 1/2. In Streptococcus pyogenes serotype M4 (strain MGAS10750), this protein is Tagatose-6-phosphate kinase.